The following is a 131-amino-acid chain: Large ribosomal subunit protein bL17 (131 aa).

This sequence belongs to the bacterial ribosomal protein bL17 family. Part of the 50S ribosomal subunit. Contacts protein L32.

The protein is Large ribosomal subunit protein bL17 of Thermotoga neapolitana (strain ATCC 49049 / DSM 4359 / NBRC 107923 / NS-E).